Consider the following 189-residue polypeptide: MFWLLALLAYLLGSLSFAIVLSRLSGSPDPRSCGSGNAGATNMLRLAGRKMAILTLLGDLCKGLLPVMLARLAGLDLQEQAWVGVCAVLGHLFPVYFRFQGGKGVATAAGMLMGLYFPAALLAIAAWLLTFYLTRTSSLAALIATPLTLPLLAWREPAALLPISVLTVMIVWRHRNNLRDLFAGRERHF.

4 helical membrane passes run 1 to 21 (MFWLLALLAYLLGSLSFAIVL), 77 to 97 (LQEQAWVGVCAVLGHLFPVYF), 111 to 131 (MLMGLYFPAALLAIAAWLLTF), and 151 to 171 (LLAWREPAALLPISVLTVMIV).

Belongs to the PlsY family. Probably interacts with PlsX.

The protein localises to the cell inner membrane. It catalyses the reaction an acyl phosphate + sn-glycerol 3-phosphate = a 1-acyl-sn-glycero-3-phosphate + phosphate. It functions in the pathway lipid metabolism; phospholipid metabolism. Catalyzes the transfer of an acyl group from acyl-phosphate (acyl-PO(4)) to glycerol-3-phosphate (G3P) to form lysophosphatidic acid (LPA). This enzyme utilizes acyl-phosphate as fatty acyl donor, but not acyl-CoA or acyl-ACP. This is Glycerol-3-phosphate acyltransferase from Pseudomonas putida (strain W619).